The sequence spans 245 residues: Triosephosphate isomerase (245 aa).

Position 9–11 (9–11 (NWK)) interacts with substrate. Histidine 92 serves as the catalytic Electrophile. The active-site Proton acceptor is glutamate 164. Substrate contacts are provided by residues glycine 170, serine 209, and 230 to 231 (GG).

This sequence belongs to the triosephosphate isomerase family. As to quaternary structure, homodimer.

Its subcellular location is the cytoplasm. It catalyses the reaction D-glyceraldehyde 3-phosphate = dihydroxyacetone phosphate. It participates in carbohydrate biosynthesis; gluconeogenesis. The protein operates within carbohydrate degradation; glycolysis; D-glyceraldehyde 3-phosphate from glycerone phosphate: step 1/1. Its function is as follows. Involved in the gluconeogenesis. Catalyzes stereospecifically the conversion of dihydroxyacetone phosphate (DHAP) to D-glyceraldehyde-3-phosphate (G3P). The protein is Triosephosphate isomerase of Cupriavidus necator (strain ATCC 17699 / DSM 428 / KCTC 22496 / NCIMB 10442 / H16 / Stanier 337) (Ralstonia eutropha).